The sequence spans 599 residues: Elongation factor 4 (599 aa).

The tr-type G domain maps to 5 to 187; that stretch reads DLIRNFSIVA…AIVTRLPPPK (183 aa). GTP is bound by residues 17–22 and 134–137; these read DHGKST and NKID.

The protein belongs to the TRAFAC class translation factor GTPase superfamily. Classic translation factor GTPase family. LepA subfamily.

Its subcellular location is the cell inner membrane. The catalysed reaction is GTP + H2O = GDP + phosphate + H(+). Its function is as follows. Required for accurate and efficient protein synthesis under certain stress conditions. May act as a fidelity factor of the translation reaction, by catalyzing a one-codon backward translocation of tRNAs on improperly translocated ribosomes. Back-translocation proceeds from a post-translocation (POST) complex to a pre-translocation (PRE) complex, thus giving elongation factor G a second chance to translocate the tRNAs correctly. Binds to ribosomes in a GTP-dependent manner. The protein is Elongation factor 4 of Cereibacter sphaeroides (strain ATCC 17025 / ATH 2.4.3) (Rhodobacter sphaeroides).